The sequence spans 268 residues: Glucosamine-6-phosphate deaminase (268 aa).

The active-site Proton acceptor; for enolization step is Asp67. The active-site For ring-opening step is Asn137. His139 (proton acceptor; for ring-opening step) is an active-site residue. The active-site For ring-opening step is Glu144.

Belongs to the glucosamine/galactosamine-6-phosphate isomerase family. NagB subfamily. As to quaternary structure, homohexamer.

It catalyses the reaction alpha-D-glucosamine 6-phosphate + H2O = beta-D-fructose 6-phosphate + NH4(+). Its pathway is amino-sugar metabolism; N-acetylneuraminate degradation; D-fructose 6-phosphate from N-acetylneuraminate: step 5/5. Catalyzes the reversible isomerization-deamination of glucosamine 6-phosphate (GlcN6P) to form fructose 6-phosphate (Fru6P) and ammonium ion. The chain is Glucosamine-6-phosphate deaminase from Pseudoalteromonas translucida (strain TAC 125).